A 95-amino-acid chain; its full sequence is UPF0473 protein CD630_12860 (95 aa).

Belongs to the UPF0473 family.

This Clostridioides difficile (strain 630) (Peptoclostridium difficile) protein is UPF0473 protein CD630_12860.